A 206-amino-acid chain; its full sequence is FKBP-type 22 kDa peptidyl-prolyl cis-trans isomerase (206 aa).

Residues 120 to 206 (TDRVRVHYTG…VFEVELLEIL (87 aa)) form the PPIase FKBP-type domain.

Homodimer.

It localises to the cytoplasm. The protein resides in the periplasm. The enzyme catalyses [protein]-peptidylproline (omega=180) = [protein]-peptidylproline (omega=0). Its activity is regulated as follows. Strongly inhibited by FK506. In terms of biological role, PPIases accelerate the folding of proteins. Catalyzes the cis-trans isomerization of proline imidic peptide bonds in oligopeptides. Displays a preference for substrates with a lysyl residue in the P1 position. This is FKBP-type 22 kDa peptidyl-prolyl cis-trans isomerase (fklB) from Escherichia coli (strain K12).